Here is a 950-residue protein sequence, read N- to C-terminus: MORC family CW-type zinc finger protein 1 (950 aa).

A coiled-coil region spans residues 281 to 342 (KGKFKTEVQK…TKHKSLRQKQ (62 aa)). Residues 465 to 530 (SLESLQWRRR…SCNQIERLPS (66 aa)) form a CW-type zinc finger. The Zn(2+) site is built by Cys-485, Cys-488, Cys-511, and Cys-522. Disordered regions lie at residues 532 to 551 (PLGT…RQLQ) and 679 to 700 (KKQQ…ASSR). Residues 541 to 550 (PSKDERERQL) are compositionally biased toward basic and acidic residues. Residues 885-916 (LGQCELKRKRTEEKLSDLRAKLALLLQKLQLG) adopt a coiled-coil conformation.

Expressed at very low level in male germ cells.

Its subcellular location is the nucleus. Functionally, required for spermatogenesis. Essential for de novo DNA methylation and silencing of transposable elements in the male embryonic germ cells. Not required for piRNA biosynthesis. The protein is MORC family CW-type zinc finger protein 1 of Mus musculus (Mouse).